We begin with the raw amino-acid sequence, 1621 residues long: Ferredoxin-dependent glutamate synthase, chloroplastic (1621 aa).

A chloroplast-targeting transit peptide spans 1 to 57 (MALQSAPKLLYSSPSPSVFSANERRVAFSDFVGLSKKRSRRRRIAGTFRNFPALSAV). Cys-105 (nucleophile) is an active-site residue. The Glutamine amidotransferase type-2 domain maps to 105–504 (CGVGFIANLD…PGMMISVDLS (400 aa)). 1183–1240 (LSETHQTLISNGLRERVILRVDGGLKCGVDVMMAAAMGADEYGFGSLAMIATGCVMAR) serves as a coordination point for FMN. Cys-1236, Cys-1242, and Cys-1247 together coordinate [3Fe-4S] cluster.

It belongs to the glutamate synthase family. As to quaternary structure, interacts with ferredoxin. Interacts (via FMN-binding domain) with SQD1. The cofactor is [3Fe-4S] cluster. FMN is required as a cofactor. Expressed in young leaves. Not detected in mature leaves.

The protein resides in the plastid. It localises to the chloroplast stroma. The catalysed reaction is 2 oxidized [2Fe-2S]-[ferredoxin] + 2 L-glutamate = L-glutamine + 2 reduced [2Fe-2S]-[ferredoxin] + 2-oxoglutarate + 2 H(+). It participates in amino-acid biosynthesis; L-glutamate biosynthesis via GLT pathway; L-glutamate from 2-oxoglutarate and L-glutamine (ferredoxin route): step 1/1. It functions in the pathway energy metabolism; nitrogen metabolism. With respect to regulation, inhibited by N-bromosuccinimide, which is specific for modification of tryptophan residues probably involved in the electron transfer from ferredoxin. Its function is as follows. Catalyzes the reductive conversion of 2-oxoglutarate plus glutamine to two molecules of glutamate, using reduced ferredoxin as the electron donor. Contains one FMN but no FAD. The FMN-binding domain is also involved in the delivery of sulfite to the reaction center of SQD1. The protein is Ferredoxin-dependent glutamate synthase, chloroplastic of Spinacia oleracea (Spinach).